Here is a 454-residue protein sequence, read N- to C-terminus: UDP-N-acetylmuramoyl-tripeptide--D-alanyl-D-alanine ligase (454 aa).

Position 116 to 122 (116 to 122 (GSVGKTT)) interacts with ATP.

The protein belongs to the MurCDEF family. MurF subfamily.

The protein localises to the cytoplasm. The catalysed reaction is D-alanyl-D-alanine + UDP-N-acetyl-alpha-D-muramoyl-L-alanyl-gamma-D-glutamyl-meso-2,6-diaminopimelate + ATP = UDP-N-acetyl-alpha-D-muramoyl-L-alanyl-gamma-D-glutamyl-meso-2,6-diaminopimeloyl-D-alanyl-D-alanine + ADP + phosphate + H(+). It functions in the pathway cell wall biogenesis; peptidoglycan biosynthesis. Functionally, involved in cell wall formation. Catalyzes the final step in the synthesis of UDP-N-acetylmuramoyl-pentapeptide, the precursor of murein. This is UDP-N-acetylmuramoyl-tripeptide--D-alanyl-D-alanine ligase from Synechocystis sp. (strain ATCC 27184 / PCC 6803 / Kazusa).